Reading from the N-terminus, the 650-residue chain is Probable potassium transport system protein Kup 1 (650 aa).

A run of 12 helical transmembrane segments spans residues 12–32, 54–74, 97–117, 139–159, 170–190, 216–236, 249–269, 295–315, 344–364, 375–395, 400–420, and 428–448; these read GLLIAIGIVYGDIGTSPLYVM, ISLVLWTVTLLTTLQTVIIAL, WLVLPALIGGAAILADGTLTP, VSSQSMVIAITVLILLVLFSI, AFGPIMFVWFTFLGVIGLINM, AGIFILGSIFLATTGAEALYS, SWPFVFVCLSLNYFGQGVWIL, LAAIILATIAAVIASQALITG, IYIPSINKGICVATIAIVLYF, GLSITISMLMTTILLYEWLAM, PVWNWIFLIFFGVLDIMFMIS, and GGYVSLFIAGAIGFIMYVWYY.

It belongs to the HAK/KUP transporter (TC 2.A.72) family.

The protein resides in the cell membrane. It carries out the reaction K(+)(in) + H(+)(in) = K(+)(out) + H(+)(out). Its function is as follows. Transport of potassium into the cell. Likely operates as a K(+):H(+) symporter. This is Probable potassium transport system protein Kup 1 from Lactobacillus acidophilus (strain ATCC 700396 / NCK56 / N2 / NCFM).